A 136-amino-acid chain; its full sequence is Putative pre-16S rRNA nuclease (136 aa).

This sequence belongs to the YqgF nuclease family.

It is found in the cytoplasm. In terms of biological role, could be a nuclease involved in processing of the 5'-end of pre-16S rRNA. The chain is Putative pre-16S rRNA nuclease from Francisella tularensis subsp. mediasiatica (strain FSC147).